The following is a 1059-amino-acid chain: IQ motif-containing protein H (1059 aa).

Residues 6–35 are a coiled coil; it reads KNKDEVGNILVKVQDDLRQLKKNIVQFTVQ. The tract at residues 245-267 is disordered; the sequence is MESAESRLLRAPPPSAASASSDN. Positions 401–430 constitute an IQ domain; it reads HQAAAVRIQTCWRRYSARTAYLIRLRSKWA.

The protein is IQ motif-containing protein H (iqch) of Danio rerio (Zebrafish).